Consider the following 1320-residue polypeptide: Myopalladin (1320 aa).

The interval 1–522 (MQDDSIEAST…FTCTASNKYG (522 aa)) is interaction with CARP. Disordered stretches follow at residues 19 to 68 (SYLA…AFLS), 84 to 145 (NYDP…SETQ), and 165 to 271 (FKSH…PPRF). Basic and acidic residues-rich tracts occupy residues 23 to 35 (ETRH…RSRA) and 87 to 106 (PLEK…DQMK). Phosphoserine is present on Ser-101. Over residues 107–130 (HSPNLSFEPNFCQDNPRSPTSSKE) the composition is skewed to polar residues. Ser-131 is modified (phosphoserine). Residues 168–182 (HSSKRIRPRACKNHK) show a composition bias toward basic residues. Over residues 186 to 201 (ESQNKVMQENSSSFSD) the composition is skewed to polar residues. Residues 218–239 (DTRDNEVNHALEQQEAKRREAE) show a composition bias toward basic and acidic residues. The stretch at 219–248 (TRDNEVNHALEQQEAKRREAEQAASEAAGG) forms a coiled coil. Low complexity predominate over residues 240 to 258 (QAASEAAGGDTTPGSSPSS). At Thr-251 the chain carries Phosphothreonine. 2 Ig-like domains span residues 269–359 (PRFT…IYIE) and 435–531 (PVFT…AQLH). 2 disulfides stabilise this stretch: Cys-290–Cys-341 and Cys-456–Cys-515. Residues 554–655 (AAIEPQPSPP…VKEPPPVLAK (102 aa)) form a disordered region. Over residues 559 to 575 (QPSPPHSEPPSVEQPPK) the composition is skewed to pro residues. Position 644 is a phosphoserine (Ser-644). The interval 649-677 (PPPVLAKPKLDSTQLQQLHNQVLLEQHQL) is interaction with NEB. At Ser-759 the chain carries Phosphoserine. The interval 763–805 (LLVSHPSVQTKSPGGLSIQNEPLPPGPTEPTPPPFTFSIPSGN) is disordered. Over residues 768–782 (PSVQTKSPGGLSIQN) the composition is skewed to polar residues. Over residues 784 to 797 (PLPPGPTEPTPPPF) the composition is skewed to pro residues. Residues Ser-813, Ser-818, Ser-867, Ser-907, and Ser-928 each carry the phosphoserine modification. Positions 844-876 (NAMGLPRSAPSMPSQGLAKKNTKSPQPVNDDNI) are disordered. Ig-like domains follow at residues 945-1029 (PIFD…GRIS), 1073-1162 (PHFL…LELS), and 1172-1262 (PVIL…ARLD). The tract at residues 945-1320 (PIFDKRLKHF…SRSVVESDEL (376 aa)) is interaction with ACTN. A disulfide bridge links Cys-1094 with Cys-1146.

Belongs to the myotilin/palladin family. Interacts with TTN/titin, NEB, NEBL, ACTN2 and CARP. As to expression, expressed in adult skeletal muscle and fetal heart.

The protein localises to the cytoplasm. It is found in the nucleus. It localises to the myofibril. The protein resides in the sarcomere. Its subcellular location is the z line. Component of the sarcomere that tethers together nebulin (skeletal muscle) and nebulette (cardiac muscle) to alpha-actinin, at the Z lines. The protein is Myopalladin (MYPN) of Homo sapiens (Human).